A 500-amino-acid polypeptide reads, in one-letter code: Cytosol aminopeptidase (500 aa).

Residues lysine 265 and aspartate 270 each contribute to the Mn(2+) site. Residue lysine 277 is part of the active site. 3 residues coordinate Mn(2+): aspartate 288, aspartate 347, and glutamate 349. Arginine 351 is an active-site residue.

It belongs to the peptidase M17 family. Requires Mn(2+) as cofactor.

Its subcellular location is the cytoplasm. It carries out the reaction Release of an N-terminal amino acid, Xaa-|-Yaa-, in which Xaa is preferably Leu, but may be other amino acids including Pro although not Arg or Lys, and Yaa may be Pro. Amino acid amides and methyl esters are also readily hydrolyzed, but rates on arylamides are exceedingly low.. The enzyme catalyses Release of an N-terminal amino acid, preferentially leucine, but not glutamic or aspartic acids.. In terms of biological role, presumably involved in the processing and regular turnover of intracellular proteins. Catalyzes the removal of unsubstituted N-terminal amino acids from various peptides. In Rickettsia prowazekii (strain Madrid E), this protein is Cytosol aminopeptidase (pepA).